A 228-amino-acid chain; its full sequence is Translin (228 aa).

Positions Arg86–His90 are DNA/RNA binding. Residues Leu177 to Leu198 form a leucine-zipper region. The residue at position 187 (Lys187) is an N6-acetyllysine. Ser190 is modified (phosphoserine). N6-acetyllysine is present on Lys199.

Belongs to the translin family. In terms of assembly, ring-shaped heterooctamer of six TSN and two TSNAX subunits, DNA/RNA binding occurs inside the ring.

It localises to the cytoplasm. Its subcellular location is the nucleus. In terms of biological role, DNA-binding protein that specifically recognizes consensus sequences at the breakpoint junctions in chromosomal translocations, mostly involving immunoglobulin (Ig)/T-cell receptor gene segments. Seems to recognize single-stranded DNA ends generated by staggered breaks occurring at recombination hot spots. Functionally, exhibits both single-stranded and double-stranded endoribonuclease activity. May act as an activator of RNA-induced silencing complex (RISC) by facilitating endonucleolytic cleavage of the siRNA passenger strand. The protein is Translin (TSN) of Cricetulus griseus (Chinese hamster).